The sequence spans 427 residues: Cyclin-L1-1 (427 aa).

The segment at histidine 258–glutamine 427 is disordered. Over residues aspartate 263 to alanine 276 the composition is skewed to polar residues. 4 stretches are compositionally biased toward basic and acidic residues: residues glutamine 289–lysine 311, lysine 328–arginine 382, aspartate 390–lysine 400, and arginine 407–lysine 421.

It belongs to the cyclin family. Cyclin L subfamily.

The protein is Cyclin-L1-1 (CYCL1-1) of Oryza sativa subsp. japonica (Rice).